Consider the following 518-residue polypeptide: Retinal dehydrogenase 2 (518 aa).

NAD(+) is bound by residues 184–186 (IPW), 210–213 (KPAE), and 264–266 (STE). The Proton acceptor role is filled by Glu286. The active-site Nucleophile is the Cys320. NAD(+) is bound by residues 366 to 370 (KQYNK) and Glu417.

The protein belongs to the aldehyde dehydrogenase family. As to quaternary structure, homotetramer.

It localises to the cytoplasm. The catalysed reaction is retinal + NAD(+) + H2O = retinoate + NADH + 2 H(+). It catalyses the reaction all-trans-retinal + NAD(+) + H2O = all-trans-retinoate + NADH + 2 H(+). The enzyme catalyses all-trans-13,14-dihydroretinal + NAD(+) + H2O = all-trans-13,14-dihydroretinoate + NADH + 2 H(+). Its pathway is cofactor metabolism; retinol metabolism. Its function is as follows. Catalyzes the NAD-dependent oxidation of aldehyde substrates, such as all-trans-retinal and all-trans-13,14-dihydroretinal, to their corresponding carboxylic acids, all-trans-retinoate and all-trans-13,14-dihydroretinoate, respectively. Retinoate signaling is critical for the transcriptional control of many genes, for instance it is crucial for initiation of meiosis in both male and female. Recognizes retinal as substrate, both in its free form and when bound to cellular retinol-binding protein. Lacks activity with benzaldehyde, acetaldehyde and octanal. Displays complete lack of activity with citral. This chain is Retinal dehydrogenase 2 (ALDH1A2), found in Gallus gallus (Chicken).